The sequence spans 168 residues: N-alpha-acetyltransferase 50 (168 aa).

Residues 5-154 (IELGDVTPHN…DAHVLQKSLR (150 aa)) enclose the N-acetyltransferase domain. Y30 is a binding site for substrate. The active site involves Y72. Substrate is bound at residue M74. 76–89 (LGCLAPYRRLGIGT) serves as a coordination point for acetyl-CoA. Residue H111 is part of the active site. 116–125 (NESAIDFYQK) serves as a coordination point for CoA. Residues 137–140 (YYKR) form a substrate region.

Belongs to the acetyltransferase family. GNAT subfamily. Interacts with naa35.

The protein resides in the cytoplasm. The protein localises to the nucleus. It carries out the reaction N-terminal L-methionyl-L-alanyl-[protein] + acetyl-CoA = N-terminal N(alpha)-acetyl-L-methionyl-L-alanyl-[protein] + CoA + H(+). The catalysed reaction is N-terminal L-methionyl-L-seryl-[protein] + acetyl-CoA = N-terminal N(alpha)-acetyl-L-methionyl-L-seryl-[protein] + CoA + H(+). It catalyses the reaction N-terminal L-methionyl-L-valyl-[protein] + acetyl-CoA = N-terminal N(alpha)-acetyl-L-methionyl-L-valyl-[protein] + CoA + H(+). The enzyme catalyses N-terminal L-methionyl-L-threonyl-[protein] + acetyl-CoA = N-terminal N(alpha)-acetyl-L-methionyl-L-threonyl-[protein] + CoA + H(+). It carries out the reaction N-terminal L-methionyl-L-lysyl-[protein] + acetyl-CoA = N-terminal N(alpha)-acetyl-L-methionyl-L-lysyl-[protein] + CoA + H(+). The catalysed reaction is N-terminal L-methionyl-L-leucyl-[protein] + acetyl-CoA = N-terminal N(alpha)-acetyl-L-methionyl-L-leucyl-[protein] + CoA + H(+). It catalyses the reaction N-terminal L-methionyl-L-phenylalanyl-[protein] + acetyl-CoA = N-terminal N(alpha)-acetyl-L-methionyl-L-phenylalanyl-[protein] + CoA + H(+). The enzyme catalyses N-terminal L-methionyl-L-tyrosyl-[protein] + acetyl-CoA = N-terminal N(alpha)-acetyl-L-methionyl-L-tyrosyl-[protein] + CoA + H(+). N-alpha-acetyltransferase that acetylates the N-terminus of proteins that retain their initiating methionine. Has a broad substrate specificity: able to acetylate the initiator methionine of most peptides, except for those with a proline in second position. Also displays N-epsilon-acetyltransferase activity by mediating acetylation of the side chain of specific lysines on proteins. The relevance of N-epsilon-acetyltransferase activity is however unclear. Required for sister chromatid cohesion during mitosis by promoting binding of CDCA5/sororin to cohesin. Essential in embryonic cell proliferation and survival. The chain is N-alpha-acetyltransferase 50 (naa50) from Danio rerio (Zebrafish).